The following is a 66-amino-acid chain: Large ribosomal subunit protein bL33c (66 aa).

It belongs to the bacterial ribosomal protein bL33 family.

The protein resides in the plastid. The protein localises to the chloroplast. In Ipomoea purpurea (Common morning glory), this protein is Large ribosomal subunit protein bL33c.